Consider the following 116-residue polypeptide: Galanin-like peptide (116 aa).

Positions 1–24 are cleaved as a signal peptide; the sequence is MAPPSVPLVLLLVLLLSLAETPAS. The propeptide occupies 87 to 116; the sequence is NVMETFAKPEIGDLGMLSMKIPKEEDVLKS.

The protein belongs to the galanin family. As to expression, isoform 2 is found in ganglia of ganglioneuroma and ganglioneuroblastoma, as well as in differentiated tumor cells of neuroblastoma tissues. Not found in undifferentiated neuroblasts. Isoform 2 is found in the skin, in pericytes covering microvascular arterioles and venules on their abluminal surfaces. In larger vessels, isoform 2 is expressed in layers of smooth muscle cells. Isoform 2 is not detected in endothelial cells.

The protein resides in the secreted. Hypothalamic neuropeptide which binds to the G-protein-coupled galanin receptors (GALR1, GALR2 and GALR3). Involved in a large number of putative physiological functions in CNS homeostatic processes, including the regulation of gonadotropin-releasing hormone secretion. Its function is as follows. Exhibits potent and dose-dependent vasoconstrictor and anti-edema activity in the cutaneous microvasculature, a physiologic effects which does not appear to be mediated via GALR1 or GALR2. Exhibits antimicrobial activity against Gram-negative bacterias, inducing bacterial membrane blebbing. This is Galanin-like peptide (GALP) from Homo sapiens (Human).